The chain runs to 351 residues: Sulfate/thiosulfate import ATP-binding protein CysA (351 aa).

One can recognise an ABC transporter domain in the interval 5–235; it reads IVVADATKRY…PANAFVMSFL (231 aa). Residue 37–44 participates in ATP binding; it reads GPSGSGKS.

This sequence belongs to the ABC transporter superfamily. Sulfate/tungstate importer (TC 3.A.1.6) family. In terms of assembly, the complex is composed of two ATP-binding proteins (CysA), two transmembrane proteins (CysT and CysW) and a solute-binding protein (CysP).

It localises to the cell membrane. It carries out the reaction sulfate(out) + ATP + H2O = sulfate(in) + ADP + phosphate + H(+). It catalyses the reaction thiosulfate(out) + ATP + H2O = thiosulfate(in) + ADP + phosphate + H(+). Its function is as follows. Part of the ABC transporter complex CysAWTP involved in sulfate/thiosulfate import. Responsible for energy coupling to the transport system. This Mycobacterium bovis (strain ATCC BAA-935 / AF2122/97) protein is Sulfate/thiosulfate import ATP-binding protein CysA.